Here is a 64-residue protein sequence, read N- to C-terminus: MARYRHSRSRSRSRYRRRRRRRSRYRGRRRRYRRSRRRRRSRRGRRGYYRRRRYSRRRRRRYYY.

Residues 1-64 (MARYRHSRSR…SRRRRRRYYY (64 aa)) form a disordered region.

The protein belongs to the protamine P1 family. As to expression, testis.

The protein localises to the nucleus. The protein resides in the chromosome. In terms of biological role, protamines substitute for histones in the chromatin of sperm during the haploid phase of spermatogenesis. They compact sperm DNA into a highly condensed, stable and inactive complex. The chain is Sperm protamine P1 (PRM1) from Hypsiprymnodon moschatus (Musky rat kangaroo).